We begin with the raw amino-acid sequence, 144 residues long: UPF0306 protein ESA_03544 (144 aa).

Belongs to the UPF0306 family.

The sequence is that of UPF0306 protein ESA_03544 from Cronobacter sakazakii (strain ATCC BAA-894) (Enterobacter sakazakii).